A 450-amino-acid chain; its full sequence is Probable ECA polymerase (450 aa).

11 consecutive transmembrane segments (helical) span residues 6 to 26 (FSGL…LTWF), 37 to 57 (VFFS…TSVL), 63 to 83 (VGVA…CFYA), 118 to 138 (VILM…NGFL), 155 to 175 (GVAL…VYFL), 181 to 201 (AWLF…MIVG), 207 to 227 (IIIA…ISLW), 228 to 248 (MLAA…LKRY), 341 to 361 (LVVM…GLII), 378 to 398 (YKAA…IVLA), and 410 to 430 (VFFI…YWLF).

Belongs to the WzyE family. As to quaternary structure, probably part of a complex composed of WzxE, WzyE and WzzE.

It is found in the cell inner membrane. It participates in bacterial outer membrane biogenesis; enterobacterial common antigen biosynthesis. Probably involved in the polymerization of enterobacterial common antigen (ECA) trisaccharide repeat units. The polypeptide is Probable ECA polymerase (Escherichia coli O139:H28 (strain E24377A / ETEC)).